Reading from the N-terminus, the 461-residue chain is Methylthioribose transporter (461 aa).

Helical transmembrane passes span 33–53 (LLGIGCVIGTGIFVITGTVAA), 56–76 (AGPALIISFILAGLACALAAF), 102–122 (LLAFLIGWDLMLEYVIALSAV), 152–172 (MAGAVFNLPAAVIILLITAIV), 185–205 (VIVLMKIAIILLFIIVGIGYV), 213–233 (FMPFGMKGVILSAATVFFAYL), 254–274 (VGIISALAVCTVLYIAVSLVL), 301–321 (VAGIISVGAIIGITTVMLALL), 355–375 (TWLTGIVAAGIAGFINLGTLA), 376–396 (HLVNMGTLAAFTVISIAVIVL), 409–429 (VPFVPVVPIISAGICLWFMYS), and 432–452 (GVTWLSFVIWIAVGTLVYFLY).

The protein belongs to the amino acid-polyamine-organocation (APC) superfamily.

It is found in the cell membrane. Functionally, involved in import of methylthioribose (MTR) into the cell. The protein is Methylthioribose transporter of Bacillus subtilis (strain 168).